The following is a 395-amino-acid chain: GPI-anchor transamidase (395 aa).

Positions 1–27 (MAVTDSLSRAASTLAAVLLLSFGSVAA) are cleaved as a signal peptide. Residues 28–368 (SHIEDQAEQF…PKLKDWHPPG (341 aa)) lie on the Lumenal side of the membrane. Residues aspartate 79, isoleucine 82, glutamate 118, and aspartate 120 each coordinate Ca(2+). Histidine 164 serves as the catalytic Proton donor. Cysteine 206 acts as the Nucleophile; acyl-thioester intermediate in catalysis. Positions 206, 232, and 234 each coordinate a protein. Residues 231–236 (DSLSHQ) are autoinhibitory loop. A disulfide bridge links cysteine 275 with cysteine 280. A helical membrane pass occupies residues 369 to 385 (GFILGLWALIIMVFFKT). Topologically, residues 386-395 (YGIKHMKFIF) are cytoplasmic.

This sequence belongs to the peptidase C13 family. As to quaternary structure, heteropentamer. Part of the GPI-anchor transamidase complex, consisting of PIGK, PIGT, PIGS, PIGU and GAA1. Interacts with GPAA1. Interacts with PIGT; this interaction, via a disulfide link, stabilizes the expression of GAA1 and PIGK and links them to PIGS. Post-translationally, the disulfide bond between PIGK/GPI8 and PIGT is important for normal enzyme activity.

The protein resides in the endoplasmic reticulum membrane. It participates in glycolipid biosynthesis; glycosylphosphatidylinositol-anchor biosynthesis. With respect to regulation, in the absence of proproteins substrates, exists in an inactive state with a disrupted catalytic site by an autoinhibitory loop. The binding of proprotein substrates, particularly the CSP region, to GPI-T triggers concerted conformational changes that alleviate the inhibition by the autoinhibitory loop. Meanwhile, proprotein residues near the omega- site induce the formation of a catalytic cleft for catalysis, following which the products are released and GPI-T reverts to the inactive state. In terms of biological role, catalytic subunit of the glycosylphosphatidylinositol-anchor (GPI-anchor) transamidase (GPI-T) complex that catalyzes the formation of the linkage between a proprotein and a GPI-anchor and participates in GPI anchored protein biosynthesis. Recognizes diverse proproteins at a C-terminal signal peptide (CSP) region that lacks consensus sequence and replaces it with a GPI-anchor via a transamidation reaction. Transamidation catalysis reaction follows a two-phase mechanism. In the acyl-enzyme phase, the carbonyl group of the proproteins's omega-site undergoes a nucleophilic attack forming an enzyme-substrate thioester bond. Followed by a general acid catalysis that allows CSP releasing, regenerating the carbonyl, and forming the acyl-enzyme intermediate. In the GPI-anchor attachment phase, the amino group of the GPI-anchor's ethanolamine phosphate, the one on third mannose (EtNP3), mediates a nucleophilic attack on the carbonyl of the acyl-enzyme intermediate, replacing the CSP, allowing GPI-anchor attachment to the omega-residue, therefore forming the product and freeing the enzyme. The polypeptide is GPI-anchor transamidase (Pongo abelii (Sumatran orangutan)).